The primary structure comprises 142 residues: Large ribosomal subunit protein uL11 (142 aa).

The protein belongs to the universal ribosomal protein uL11 family. Part of the ribosomal stalk of the 50S ribosomal subunit. Interacts with L10 and the large rRNA to form the base of the stalk. L10 forms an elongated spine to which L12 dimers bind in a sequential fashion forming a multimeric L10(L12)X complex. One or more lysine residues are methylated.

Its function is as follows. Forms part of the ribosomal stalk which helps the ribosome interact with GTP-bound translation factors. In Mycobacterium ulcerans (strain Agy99), this protein is Large ribosomal subunit protein uL11.